The sequence spans 137 residues: Thioredoxin-like protein R548 (137 aa).

In terms of domain architecture, Thioredoxin spans 2–137; the sequence is SKDSVETNTI…LEKSIVESSQ (136 aa). Active-site nucleophile residues include C61 and C64. A disulfide bridge links C61 with C64.

This sequence belongs to the thioredoxin family.

Its function is as follows. Participates in various redox reactions through the reversible oxidation of its active center dithiol to a disulfide and catalyzes dithiol-disulfide exchange reactions. The sequence is that of Thioredoxin-like protein R548 from Acanthamoeba polyphaga mimivirus (APMV).